The sequence spans 257 residues: Deoxyribose-phosphate aldolase (257 aa).

Residue Asp102 is the Proton donor/acceptor of the active site. The active-site Schiff-base intermediate with acetaldehyde is Lys166. The active-site Proton donor/acceptor is Lys198.

It belongs to the DeoC/FbaB aldolase family. DeoC type 2 subfamily.

It localises to the cytoplasm. The catalysed reaction is 2-deoxy-D-ribose 5-phosphate = D-glyceraldehyde 3-phosphate + acetaldehyde. It functions in the pathway carbohydrate degradation; 2-deoxy-D-ribose 1-phosphate degradation; D-glyceraldehyde 3-phosphate and acetaldehyde from 2-deoxy-alpha-D-ribose 1-phosphate: step 2/2. Functionally, catalyzes a reversible aldol reaction between acetaldehyde and D-glyceraldehyde 3-phosphate to generate 2-deoxy-D-ribose 5-phosphate. In Shewanella piezotolerans (strain WP3 / JCM 13877), this protein is Deoxyribose-phosphate aldolase.